We begin with the raw amino-acid sequence, 151 residues long: Ribosomal RNA large subunit methyltransferase H (151 aa).

Residues Leu-70, Gly-99, and 118–123 (LSKLTF) contribute to the S-adenosyl-L-methionine site.

This sequence belongs to the RNA methyltransferase RlmH family. Homodimer.

The protein localises to the cytoplasm. The catalysed reaction is pseudouridine(1915) in 23S rRNA + S-adenosyl-L-methionine = N(3)-methylpseudouridine(1915) in 23S rRNA + S-adenosyl-L-homocysteine + H(+). Its function is as follows. Specifically methylates the pseudouridine at position 1915 (m3Psi1915) in 23S rRNA. This chain is Ribosomal RNA large subunit methyltransferase H, found in Gloeobacter violaceus (strain ATCC 29082 / PCC 7421).